The primary structure comprises 419 residues: Enolase (419 aa).

(2R)-2-phosphoglycerate is bound at residue glutamine 161. Residue glutamate 205 is the Proton donor of the active site. Residues aspartate 240, glutamate 283, and aspartate 309 each coordinate Mg(2+). Lysine 334, arginine 363, serine 364, and lysine 385 together coordinate (2R)-2-phosphoglycerate. The Proton acceptor role is filled by lysine 334.

This sequence belongs to the enolase family. Requires Mg(2+) as cofactor.

The protein resides in the cytoplasm. The protein localises to the secreted. It is found in the cell surface. The catalysed reaction is (2R)-2-phosphoglycerate = phosphoenolpyruvate + H2O. It participates in carbohydrate degradation; glycolysis; pyruvate from D-glyceraldehyde 3-phosphate: step 4/5. Catalyzes the reversible conversion of 2-phosphoglycerate (2-PG) into phosphoenolpyruvate (PEP). It is essential for the degradation of carbohydrates via glycolysis. This is Enolase from Saccharolobus islandicus (strain M.16.27) (Sulfolobus islandicus).